The sequence spans 75 residues: Large ribosomal subunit protein bL31 (75 aa).

As to quaternary structure, part of the 50S ribosomal subunit.

In terms of biological role, binds the 23S rRNA. This is Large ribosomal subunit protein bL31 from Rhodopseudomonas palustris (strain ATCC BAA-98 / CGA009).